Consider the following 409-residue polypeptide: O-methyltransferase pyiA (409 aa).

A compositionally biased stretch (polar residues) spans 1–21 (MASQDGTTELLSQSVNSTCIP). The disordered stretch occupies residues 1-46 (MASQDGTTELLSQSVNSTCIPGSTYHVDRGRASSASTPPTSPPLSE). Aspartate 271 provides a ligand contact to S-adenosyl-L-methionine. Catalysis depends on histidine 317, which acts as the Proton acceptor.

It belongs to the class I-like SAM-binding methyltransferase superfamily. Cation-independent O-methyltransferase family.

Its pathway is mycotoxin biosynthesis. Its function is as follows. O-methyltransferase; part of the gene cluster that mediates the biosynthesis of the mycotoxin pyrichalasin H, a tyrosine-derived cytochalasan that inhibits the growth of rice seedlings, but also inhibits lymphocyte capping and actin polymerization and alters cell morphology. Pyrichalasin H is indicated as the responsible agent for the genus-specific pathogenicity of M.grisea toward crabgrass. The first step in the pathway is catalyzed by the O-methyltransferase pyiA which methylates free tyrosine to generate the precursor O-methyltyrosine. The hybrid PKS-NRPS pyiS, assisted by the enoyl reductase pyiC, are responsible for fusion of the O-methyltyrosine precursor and the polyketide backbone. The polyketide synthase module (PKS) of pyiS is responsible for the synthesis of the polyketide backbone and the downstream nonribosomal peptide synthetase (NRPS) amidates the carboxyl end of the polyketide with the O-methyltyrosine precursor. As the NRPS A-domain demonstrates substrate tolerance, pyiS can also use phenylalanine, tyrosine and even para-chlorophenylalanine as amino acid precursor, which leads to the production of novel cytochalasans, including halogenated cytochalasans. Because pyiS lacks a designated enoylreductase (ER) domain, the required activity is provided the enoyl reductase pyiC. Reduction by the hydrolyase pyiE leads to 1,5-dihydropyrrolone, which is substrate for dehydration and intra-molecular Diels-Alder cyclization by the Diels-Alderase pyiF to yield the required isoindolone-fused macrocycle. The tailoring cytochrome P450 monooxygenases piyD and piyG catalyze the hydroxylation at C-18 and C-7, respectivily, whereas the short-chain dehydrogenase/reductase pyiH reduces the carbonyl at C-21 in preparation for the transfer of an acetyl group by the acetyltransferase pyiB. These 3 reactions whose order is not clear yet, lead to the production of O-methylpyrichalasin J, a deacetylated pyrichalasin H. Finally, pyiB to converts O-methylpyrichalasin J into the final product pyrichalasin H via acetylation of C-21. In Pyricularia grisea (Crabgrass-specific blast fungus), this protein is O-methyltransferase pyiA.